A 290-amino-acid chain; its full sequence is Probable ECF RNA polymerase sigma factor SigI (290 aa).

A sigma-70 factor domain-2 region spans residues Trp11–Ser74. The short motif at Asp34–Gln37 is the Polymerase core binding element. The interval Leu110–Ile162 is sigma-70 factor domain-4_2. Residues Tyr137 to His156 constitute a DNA-binding region (H-T-H motif).

This sequence belongs to the sigma-70 factor family. ECF subfamily. As to quaternary structure, interacts transiently with the RNA polymerase catalytic core formed by RpoA, RpoB, RpoC and RpoZ (2 alpha, 1 beta, 1 beta' and 1 omega subunit) to form the RNA polymerase holoenzyme that can initiate transcription.

In terms of biological role, sigma factors are initiation factors that promote the attachment of RNA polymerase to specific initiation sites and are then released. Extracytoplasmic function (ECF) sigma factors are held in an inactive form by a cognate anti-sigma factor until released, although no anti-sigma factor is known for this protein. This chain is Probable ECF RNA polymerase sigma factor SigI (sigI), found in Mycobacterium tuberculosis (strain CDC 1551 / Oshkosh).